Reading from the N-terminus, the 240-residue chain is NKG2-E type II integral membrane protein (240 aa).

Residues 1-12 (MSKQRGTFSEVS) show a composition bias toward polar residues. The interval 1 to 31 (MSKQRGTFSEVSLAQDPKWQQRKPKGNKSSI) is disordered. Residues 1–70 (MSKQRGTFSE…CQGLLPPPEK (70 aa)) are Cytoplasmic-facing. A helical; Signal-anchor for type II membrane protein transmembrane segment spans residues 71–93 (LTAEVLGIICIVLMATVLKTIVL). Residues 94-240 (IPFLEQNNSS…IMLTRLVLNS (147 aa)) lie on the Extracellular side of the membrane. Residue N100 is glycosylated (N-linked (GlcNAc...) asparagine). The C-type lectin domain maps to 116–230 (HCPEEWITYS…GSSRIIRRGF (115 aa)). A disulfide bond links C117 and C128. Residues N149 and N179 are each glycosylated (N-linked (GlcNAc...) asparagine). A disulfide bridge links C207 with C220.

In terms of assembly, can form disulfide-bonded heterodimer with CD94. In terms of tissue distribution, natural killer cells.

Its subcellular location is the membrane. Functionally, plays a role as a receptor for the recognition of MHC class I HLA-E molecules by NK cells and some cytotoxic T-cells. This chain is NKG2-E type II integral membrane protein (KLRC3), found in Homo sapiens (Human).